Reading from the N-terminus, the 341-residue chain is GDP-fucose transporter 1 (341 aa).

10 helical membrane passes run leucine 17–threonine 37, tyrosine 41–glycine 61, phenylalanine 71–phenylalanine 91, aspartate 103–phenylalanine 123, leucine 132–serine 152, leucine 156–isoleucine 176, isoleucine 187–phenylalanine 207, alanine 231–alanine 251, alanine 260–tryptophan 280, and histidine 283–glutamine 303. Residues serine 316–valine 341 are disordered.

Belongs to the nucleotide-sugar transporter family. GDP-Mannose:GMP antiporter (GMA) (TC 2.A.7.13) subfamily. As to expression, ubiquitous.

It localises to the golgi apparatus membrane. In terms of biological role, acts as the major nucleotide-sugar transporter for the import of GDP-Fucose into the Golgi lumen. Transports GDP-Fucose in a strict counter-exchange mode. Is required for proper plant growth and development. Also acts as a GDP-mannose transporter that may be involved in the import of GDP-mannose from the cytoplasm into the Golgi lumen. The chain is GDP-fucose transporter 1 from Arabidopsis thaliana (Mouse-ear cress).